We begin with the raw amino-acid sequence, 205 residues long: MIDFVEGTLSYLDSEYIVIETGGIGYRLFCPNPYQFVRYEGNKTKLFTHHHVREDAILLYGFATRDERDLFRKLLDVSGIGPKGGLAILAAATPEQLVMAVQQENVTYLTKFPGIGKKTAQRIILDLKDKLVGYTPSAILTVAAGDLTAGEQAVSALNEALDALTALGYSDGELQKIRNTLSEKSKEGDGVEKLIKQGLALLMRG.

The interval 1–63 (MIDFVEGTLS…EDAILLYGFA (63 aa)) is domain I. A domain II region spans residues 64 to 142 (TRDERDLFRK…GYTPSAILTV (79 aa)). The tract at residues 143–153 (AAGDLTAGEQA) is flexible linker. The domain III stretch occupies residues 153–205 (AVSALNEALDALTALGYSDGELQKIRNTLSEKSKEGDGVEKLIKQGLALLMRG).

Belongs to the RuvA family. In terms of assembly, homotetramer. Forms an RuvA(8)-RuvB(12)-Holliday junction (HJ) complex. HJ DNA is sandwiched between 2 RuvA tetramers; dsDNA enters through RuvA and exits via RuvB. An RuvB hexamer assembles on each DNA strand where it exits the tetramer. Each RuvB hexamer is contacted by two RuvA subunits (via domain III) on 2 adjacent RuvB subunits; this complex drives branch migration. In the full resolvosome a probable DNA-RuvA(4)-RuvB(12)-RuvC(2) complex forms which resolves the HJ.

Its subcellular location is the cytoplasm. Functionally, the RuvA-RuvB-RuvC complex processes Holliday junction (HJ) DNA during genetic recombination and DNA repair, while the RuvA-RuvB complex plays an important role in the rescue of blocked DNA replication forks via replication fork reversal (RFR). RuvA specifically binds to HJ cruciform DNA, conferring on it an open structure. The RuvB hexamer acts as an ATP-dependent pump, pulling dsDNA into and through the RuvAB complex. HJ branch migration allows RuvC to scan DNA until it finds its consensus sequence, where it cleaves and resolves the cruciform DNA. The sequence is that of Holliday junction branch migration complex subunit RuvA from Brevibacillus brevis (strain 47 / JCM 6285 / NBRC 100599).